Consider the following 184-residue polypeptide: Large ribosomal subunit protein uL5c (184 aa).

This sequence belongs to the universal ribosomal protein uL5 family. In terms of assembly, part of the 50S ribosomal subunit; contacts the 5S rRNA.

It is found in the plastid. It localises to the chloroplast. In terms of biological role, binds 5S rRNA, forms part of the central protuberance of the 50S subunit. The protein is Large ribosomal subunit protein uL5c (rpl5) of Zygnema circumcarinatum (Green alga).